Reading from the N-terminus, the 407-residue chain is Imidazolonepropionase (407 aa).

His-74 and His-76 together coordinate Fe(3+). Zn(2+) contacts are provided by His-74 and His-76. Residues Arg-83, Tyr-146, and His-179 each contribute to the 4-imidazolone-5-propanoate site. Residue Tyr-146 participates in N-formimidoyl-L-glutamate binding. His-244 is a binding site for Fe(3+). Residue His-244 participates in Zn(2+) binding. Position 247 (Gln-247) interacts with 4-imidazolone-5-propanoate. Residue Asp-319 participates in Fe(3+) binding. Asp-319 is a binding site for Zn(2+). The N-formimidoyl-L-glutamate site is built by Asn-321 and Gly-323. 4-imidazolone-5-propanoate is bound at residue Thr-324.

Belongs to the metallo-dependent hydrolases superfamily. HutI family. Requires Zn(2+) as cofactor. The cofactor is Fe(3+).

It localises to the cytoplasm. The catalysed reaction is 4-imidazolone-5-propanoate + H2O = N-formimidoyl-L-glutamate. It functions in the pathway amino-acid degradation; L-histidine degradation into L-glutamate; N-formimidoyl-L-glutamate from L-histidine: step 3/3. Its function is as follows. Catalyzes the hydrolytic cleavage of the carbon-nitrogen bond in imidazolone-5-propanoate to yield N-formimidoyl-L-glutamate. It is the third step in the universal histidine degradation pathway. The sequence is that of Imidazolonepropionase from Salmonella schwarzengrund (strain CVM19633).